The following is a 323-amino-acid chain: Fructose-1,6-bisphosphatase class 1 (323 aa).

Positions 93, 114, 116, and 117 each coordinate Mg(2+). Substrate contacts are provided by residues 117 to 120 (DGSS), Asn205, Tyr233, and Lys263. Mg(2+) is bound at residue Glu269.

Belongs to the FBPase class 1 family. As to quaternary structure, homotetramer. Mg(2+) is required as a cofactor.

Its subcellular location is the cytoplasm. The catalysed reaction is beta-D-fructose 1,6-bisphosphate + H2O = beta-D-fructose 6-phosphate + phosphate. Its pathway is carbohydrate biosynthesis; gluconeogenesis. In Sulfurihydrogenibium sp. (strain YO3AOP1), this protein is Fructose-1,6-bisphosphatase class 1.